Here is a 335-residue protein sequence, read N- to C-terminus: Lipase chaperone (335 aa).

A helical membrane pass occupies residues 7 to 23 (LLPLAIALGLGFFIARP).

It belongs to the lipase chaperone family.

Its subcellular location is the cell inner membrane. In terms of biological role, may be involved in the folding of the extracellular lipase during its passage through the periplasm. In Ectopseudomonas mendocina (Pseudomonas mendocina), this protein is Lipase chaperone (lifO).